The chain runs to 95 residues: Pyruvate dehydrogenase inhibitor (95 aa).

It belongs to the HesB/IscA family. As to quaternary structure, interacts with the E1 module of pyruvate dehydrogenase (PdhA-PdhB).

Its function is as follows. Acts as an inhibitor of the pyruvate dehydrogenase. Overexpression does not affect growth with glucose as the main carbon source, but it leads to a dramatic growth defect when cells are grown with pyruvate as the sole carbon source. The polypeptide is Pyruvate dehydrogenase inhibitor (Bacillus subtilis (strain 168)).